Consider the following 230-residue polypeptide: Orotidine 5'-phosphate decarboxylase (230 aa).

Substrate-binding positions include Asp10, Lys32, 59–68, Thr119, Arg180, Gln189, Gly209, and Arg210; that span reads DLKYHDIPNT. The active-site Proton donor is the Lys61.

The protein belongs to the OMP decarboxylase family. Type 1 subfamily. Homodimer.

It carries out the reaction orotidine 5'-phosphate + H(+) = UMP + CO2. It participates in pyrimidine metabolism; UMP biosynthesis via de novo pathway; UMP from orotate: step 2/2. In terms of biological role, catalyzes the decarboxylation of orotidine 5'-monophosphate (OMP) to uridine 5'-monophosphate (UMP). This is Orotidine 5'-phosphate decarboxylase from Actinobacillus pleuropneumoniae serotype 5b (strain L20).